The following is a 254-amino-acid chain: Type III pantothenate kinase (254 aa).

13-20 (MIGNTRQH) is a binding site for ATP. Residues tyrosine 84 and 88–91 (GLDR) contribute to the substrate site. Aspartate 90 serves as the catalytic Proton acceptor. Aspartate 110 contributes to the K(+) binding site. ATP is bound at residue threonine 113. Residue threonine 166 participates in substrate binding.

This sequence belongs to the type III pantothenate kinase family. In terms of assembly, homodimer. It depends on NH4(+) as a cofactor. K(+) serves as cofactor.

The protein resides in the cytoplasm. The enzyme catalyses (R)-pantothenate + ATP = (R)-4'-phosphopantothenate + ADP + H(+). It functions in the pathway cofactor biosynthesis; coenzyme A biosynthesis; CoA from (R)-pantothenate: step 1/5. Catalyzes the phosphorylation of pantothenate (Pan), the first step in CoA biosynthesis. The protein is Type III pantothenate kinase of Thermosynechococcus vestitus (strain NIES-2133 / IAM M-273 / BP-1).